A 538-amino-acid polypeptide reads, in one-letter code: Putative cysteine ligase BshC (538 aa).

Residues 419 to 445 (IEAKRQIQAMEQLLAEKYSELASYLEE) are a coiled coil.

The protein belongs to the BshC family.

Its function is as follows. Involved in bacillithiol (BSH) biosynthesis. May catalyze the last step of the pathway, the addition of cysteine to glucosamine malate (GlcN-Mal) to generate BSH. The protein is Putative cysteine ligase BshC of Lysinibacillus sphaericus (strain C3-41).